A 122-amino-acid chain; its full sequence is Large ribosomal subunit protein uL14 (122 aa).

Belongs to the universal ribosomal protein uL14 family. Part of the 50S ribosomal subunit. Forms a cluster with proteins L3 and L19. In the 70S ribosome, L14 and L19 interact and together make contacts with the 16S rRNA in bridges B5 and B8.

Binds to 23S rRNA. Forms part of two intersubunit bridges in the 70S ribosome. The sequence is that of Large ribosomal subunit protein uL14 from Halorhodospira halophila (strain DSM 244 / SL1) (Ectothiorhodospira halophila (strain DSM 244 / SL1)).